The following is a 165-amino-acid chain: V-type proton ATPase 16 kDa proteolipid subunit (165 aa).

The Lumenal portion of the chain corresponds to 1–10; it reads MSSVFSGDET. The chain crosses the membrane as a helical span at residues 11 to 33; it reads APFFGFLGAASALIFSCMGAAYG. Over 34-55 the chain is Cytoplasmic; sequence TAKSGVGVASMGVMRPELVMKS. Residues 56–76 form a helical membrane-spanning segment; the sequence is IVPVVMAGVLGIYGLIIAVII. At 77–95 the chain is on the lumenal side; the sequence is STGINPKAKPYYLFDGYAH. The chain crosses the membrane as a helical span at residues 96–117; sequence LSSGLACGLAGLAAGMAIGIVG. The Cytoplasmic segment spans residues 118–129; it reads DAGVRANAQQPK. The helical transmembrane segment at 130–155 threads the bilayer; it reads LFVGMILILIFAEALALYGLIVGIIL. The Lumenal portion of the chain corresponds to 156 to 165; sequence SSRAGQSRAD.

It belongs to the V-ATPase proteolipid subunit family. V-ATPase is a heteromultimeric enzyme composed of a peripheral catalytic V1 complex (main components: subunits A, B, C, D, E, and F) attached to an integral membrane V0 proton pore complex (main component: the proteolipid protein; which is present as a hexamer that forms the proton-conducting pore).

The protein resides in the vacuole membrane. Proton-conducting pore forming subunit of the membrane integral V0 complex of vacuolar ATPase. V-ATPase is responsible for acidifying a variety of intracellular compartments in eukaryotic cells. This chain is V-type proton ATPase 16 kDa proteolipid subunit (VATP-P1), found in Oryza sativa subsp. indica (Rice).